A 368-amino-acid polypeptide reads, in one-letter code: MPRPIQAVIHQPALANNLEVVRRQAPASRIWAVVKANAYGHGIRRVFAGLKAADGFGLLDLSEAVLLRDLGWQGPILLLEGIFQAQDVPLLEQYRLTTAVHCEEQLRMLELARPKGPLAIQLKLNTGMNRLGFRPAQYRAAWERARTMSCIGSIVHMTHFSDADSKRGIAHQVEAFEAATANLPGEVSMANSAAVLWHPQAHRNWVRPGIILYGGSPTGVSSDIAETGLQPAMSLHSELIGIQDLQPGDTVGYGSMFTADRAMRVGVVACGYADGYPRHAVGWGERRAPVLVDGVRTQLVGRVSMDMICVDLTPCPKAKVGTPVTLWGHGLPIDDVAAASGTVGYELMCALAPRVPTSVATLTTADAV.

K35 (proton acceptor; specific for D-alanine) is an active-site residue. N6-(pyridoxal phosphate)lysine is present on K35. R130 serves as a coordination point for substrate. Residue Y253 is the Proton acceptor; specific for L-alanine of the active site. M305 lines the substrate pocket.

It belongs to the alanine racemase family. Pyridoxal 5'-phosphate serves as cofactor.

The catalysed reaction is L-alanine = D-alanine. Its pathway is amino-acid biosynthesis; D-alanine biosynthesis; D-alanine from L-alanine: step 1/1. Catalyzes the interconversion of L-alanine and D-alanine. May also act on other amino acids. This is Alanine racemase (alr) from Cupriavidus metallidurans (strain ATCC 43123 / DSM 2839 / NBRC 102507 / CH34) (Ralstonia metallidurans).